Reading from the N-terminus, the 471-residue chain is Monocarboxylate transporter 11 (471 aa).

Residues 1–13 (MPAPQRKHRRGGF) show a composition bias toward basic residues. The tract at residues 1 to 31 (MPAPQRKHRRGGFSHRCFPTPQTAMTPQPAG) is disordered. Topologically, residues 1–35 (MPAPQRKHRRGGFSHRCFPTPQTAMTPQPAGPPDG) are cytoplasmic. Positions 19–28 (PTPQTAMTPQ) are enriched in low complexity. The next 12 helical transmembrane spans lie at 36 to 56 (GWGW…YGLL), 78 to 98 (AWIS…GSAL), 106 to 126 (PVVM…AFAS), 131 to 151 (LYLG…APAL), 163 to 183 (VLAV…LAPA), 198 to 218 (LLLG…LPLV), 243 to 263 (AFSI…VPYV), 273 to 293 (GLGG…DAGA), 312 to 332 (LAVF…VPVV), 333 to 353 (GGEE…GLSA), 367 to 389 (LVGV…LGGL), and 407 to 427 (ASFL…IGLP). Over 428–471 (RALPSCGPASPPATPPPETGELLPAPQAVLLSPGGPGSTLDTTC) the chain is Cytoplasmic.

This sequence belongs to the major facilitator superfamily. Monocarboxylate porter (TC 2.A.1.13) family. As to quaternary structure, interacts with isoform 2 of BSG. In terms of tissue distribution, expressed in liver, salivary gland and thyroid.

Its subcellular location is the endoplasmic reticulum membrane. It localises to the cell membrane. It catalyses the reaction pyruvate(out) + H(+)(out) = pyruvate(in) + H(+)(in). Its function is as follows. Proton-linked monocarboxylate transporter. It catalyzes the transport of pyruvate across the plasma membrane. Probably involved in hepatic lipid metabolism: overexpression results in an increase of triacylglycerol(TAG) levels, small increases in intracellular diacylglycerols and decreases in lysophosphatidylcholine, cholesterol ester and sphingomyelin lipids. This Homo sapiens (Human) protein is Monocarboxylate transporter 11 (SLC16A11).